The following is a 255-amino-acid chain: 1-(5-phosphoribosyl)-5-[(5-phosphoribosylamino)methylideneamino] imidazole-4-carboxamide isomerase (255 aa).

D8 (proton acceptor) is an active-site residue. The Proton donor role is filled by D129.

This sequence belongs to the HisA/HisF family.

The protein localises to the cytoplasm. It catalyses the reaction 1-(5-phospho-beta-D-ribosyl)-5-[(5-phospho-beta-D-ribosylamino)methylideneamino]imidazole-4-carboxamide = 5-[(5-phospho-1-deoxy-D-ribulos-1-ylimino)methylamino]-1-(5-phospho-beta-D-ribosyl)imidazole-4-carboxamide. It functions in the pathway amino-acid biosynthesis; L-histidine biosynthesis; L-histidine from 5-phospho-alpha-D-ribose 1-diphosphate: step 4/9. The polypeptide is 1-(5-phosphoribosyl)-5-[(5-phosphoribosylamino)methylideneamino] imidazole-4-carboxamide isomerase (Prochlorococcus marinus (strain MIT 9303)).